The primary structure comprises 326 residues: High-affinity zinc uptake system protein ZnuA (326 aa).

An N-terminal signal peptide occupies residues Met-1–Ala-22. Position 59 (His-59) interacts with Zn(2+). The segment covering Gly-117–Thr-155 has biased composition (basic and acidic residues). The tract at residues Gly-117–Leu-161 is disordered. Zn(2+) is bound by residues His-158, His-222, and Asp-295. A disulfide bridge links Cys-267 with Cys-322.

Belongs to the bacterial solute-binding protein 9 family. In terms of assembly, monomer.

Its subcellular location is the periplasm. Part of the ATP-binding cassette (ABC) transport system ZnuABC involved in zinc import. Binds zinc with high affinity and specificity and delivers it to the membrane permease for translocation into the cytoplasm. The protein is High-affinity zinc uptake system protein ZnuA of Paracoccus denitrificans (strain Pd 1222).